The sequence spans 186 residues: Peptide deformylase (186 aa).

Residues C94 and H136 each contribute to the Fe cation site. E137 is an active-site residue. Residue H140 participates in Fe cation binding.

This sequence belongs to the polypeptide deformylase family. The cofactor is Fe(2+).

The enzyme catalyses N-terminal N-formyl-L-methionyl-[peptide] + H2O = N-terminal L-methionyl-[peptide] + formate. Its function is as follows. Removes the formyl group from the N-terminal Met of newly synthesized proteins. Requires at least a dipeptide for an efficient rate of reaction. N-terminal L-methionine is a prerequisite for activity but the enzyme has broad specificity at other positions. The protein is Peptide deformylase of Prosthecochloris aestuarii (strain DSM 271 / SK 413).